Here is a 284-residue protein sequence, read N- to C-terminus: uncharacterized protein (284 aa).

Residues 12-32 (ILFILFVVAFCVYLVPRVAIN) traverse the membrane as a helical segment.

It belongs to the serine esterase family.

The protein resides in the membrane. This is an uncharacterized protein from Escherichia coli O157:H7.